Here is a 164-residue protein sequence, read N- to C-terminus: UPF0178 protein BRADO3147 (164 aa).

This sequence belongs to the UPF0178 family.

The protein is UPF0178 protein BRADO3147 of Bradyrhizobium sp. (strain ORS 278).